The primary structure comprises 452 residues: MTDHELSESEKAIERYKVKKLIQMLESARGMGTSVISIYMTPKEQISGMVTKLNNEYGTASNIKSHTNKLSVQSAITASLGRLKQYNRLPPNGLLLYCGTVLTAENKEKKLTLDIEPFKPVSRSLYLCDNKFHTEELHRMLESDEKFGFIVVDGSGTTYATLCGSVKEKLSSFTVELPKKHGRGGQSKNRFARIRMERRHNYLRKVAEGATQLFITNDRPNIVGLVLAGSAEFKEVLYQSDLFDPRLKAIVVKVVDVAHPGDVGLNQAIDLAADALSGVKLVQEKKLLQGFFDQIACDTQLYCFGVQDTLKCLEAGAVETLIVYEDLNIYRYTVVKNRGADDEETFVHVMSEEEAKRSNIHMQESGKTRNEIEQEDFVDWLATNYRKFGCALELITNRSQEGTQFVRGFGGIGGVLRYKLDIIALRDVEKKEDDEERIAANNEEFDFDDDFM.

This sequence belongs to the eukaryotic release factor 1 family. Heterodimer of two subunits, one of which binds GTP.

The protein localises to the cytoplasm. In terms of biological role, directs the termination of nascent peptide synthesis (translation) in response to the termination codons UAA, UAG and UGA. In Trypanosoma brucei brucei, this protein is Eukaryotic peptide chain release factor subunit 1 (ERF1).